A 304-amino-acid polypeptide reads, in one-letter code: Putative S-adenosyl-L-methionine-dependent methyltransferase Mjls_1071 (304 aa).

S-adenosyl-L-methionine-binding positions include Asp130 and 159 to 160; that span reads DL.

Belongs to the UPF0677 family.

In terms of biological role, exhibits S-adenosyl-L-methionine-dependent methyltransferase activity. The polypeptide is Putative S-adenosyl-L-methionine-dependent methyltransferase Mjls_1071 (Mycobacterium sp. (strain JLS)).